The primary structure comprises 480 residues: Probable cyclodipeptide synthase PUL1 (480 aa).

It participates in siderophore biosynthesis. Probable cyclodipeptide synthase; part of the PUL gene cluster that mediates the formation of pulcherrimin, a red iron-containing pigment composed of two cyclized and modified leucine molecules that acts as a siderophore, a chelator that binds iron outside the cell for subsequent uptake. Two leucine molecules are cyclized via a cyclodipeptide synthase, and the resulting diketopiperazine is oxidized by a cytochrome P450 monooxygenase to generate pulcherriminic acid (PA), which can then spontaneously bind iron to form pulcherrimin. The probable cyclodipeptide synthase PUL1 and the cytochrome P450 monooxygenase PUL2 encode the enzymes responsible for the two-step pulcherrimin biosynthesis pathway. This chain is Probable cyclodipeptide synthase PUL1, found in Kluyveromyces lactis (strain ATCC 8585 / CBS 2359 / DSM 70799 / NBRC 1267 / NRRL Y-1140 / WM37) (Yeast).